The sequence spans 278 residues: Indole-3-glycerol phosphate synthase (278 aa).

Belongs to the TrpC family.

The enzyme catalyses 1-(2-carboxyphenylamino)-1-deoxy-D-ribulose 5-phosphate + H(+) = (1S,2R)-1-C-(indol-3-yl)glycerol 3-phosphate + CO2 + H2O. It functions in the pathway amino-acid biosynthesis; L-tryptophan biosynthesis; L-tryptophan from chorismate: step 4/5. The polypeptide is Indole-3-glycerol phosphate synthase (Stutzerimonas stutzeri (strain A1501) (Pseudomonas stutzeri)).